The following is a 656-amino-acid chain: MISSASGTNWNRPDSFKGTQCRNIIIHGYCKFENEGCQFNHGNSKETEGQTTDEVPTQRSMTPLNVKFNAKTSSSFTPGKSPAVRSPDFSSLPAFQPGAPVNDQPMLADGPQISGTMSPSLMNSNATAFAPSFNPYASESFTPSVSAGGIPSSQELAGTLHGSNPSIPSPVPSNPYVNSAGLPSGGMLGVGHPMQGLPPPPPPGALPVNPITQFPTVYPPTHSVLQYHLYAPDPPPHLKIPLKPNERTPETLFINNHLRDRLVKNNQTALQVFPRGSLPDIVGDYFGLVPMDFHNRTSDKKRYNGHKNSLYKVFSNLDGKIYFMRRIHDVKITDSAQVSKPFQTWSHLRSANITVLKDSFVTSAFNDSSLCMVFDYYPQSQSLYETYGLANSVNELNQEYLWAFLVQLTIALQEVHSNGLALNDLDWKKVIVTGEPGRIKVTDIGVYDTLNYHQEGRMLHTEQQQNYLSLAELLLNLVQRLCGASGPLDDVKSYHIDPLFKKCIQYLQDTSNNNKNIEDFTKLFSHKVLSVVNSLQYNSEYLEQQLSRELENARLFRLMCKLNAIYGRLESRIDINWAESGEKFPIILFFDYVFHQKDDTGKNVMDLTHVLRCLNKLDAGVSERLMLVTPDEMNCIIISYKELKDLIDSTFRALTQ.

The C3H1-type zinc-finger motif lies at 15–44 (SFKGTQCRNIIIHGYCKFENEGCQFNHGNS). The segment at 71–104 (KTSSSFTPGKSPAVRSPDFSSLPAFQPGAPVNDQ) is disordered. Residues 128-148 (AFAPSFNPYASESFTPSVSAG) carry the PABPC-interacting motif-2 (PAM-2) motif. A pseudokinase domain region spans residues 271-525 (QVFPRGSLPD…NIEDFTKLFS (255 aa)). ATP is bound by residues arginine 325, 375–382 (DYYPQSQS), and 428–429 (KK). Residues 526–564 (HKVLSVVNSLQYNSEYLEQQLSRELENARLFRLMCKLNA) are a coiled coil. The tract at residues 565–656 (IYGRLESRID…IDSTFRALTQ (92 aa)) is knob domain.

This sequence belongs to the protein kinase superfamily. PAN3 family. In terms of assembly, homodimer. Forms a heterotrimer with a catalytic subunit PAN2 to form the poly(A)-nuclease (PAN) deadenylation complex. Interacts (via PAM-2 motif) with poly(A)-binding protein PAB1 (via PABC domain), conferring substrate specificity of the enzyme complex.

It localises to the cytoplasm. Its function is as follows. Regulatory subunit of the poly(A)-nuclease (PAN) deadenylation complex, one of two cytoplasmic mRNA deadenylases involved in mRNA turnover. PAN specifically shortens poly(A) tails of RNA and the activity is stimulated by poly(A)-binding protein PAB1. PAN deadenylation is followed by rapid degradation of the shortened mRNA tails by the CCR4-NOT complex. Deadenylated mRNAs are then degraded by two alternative mechanisms, namely exosome-mediated 3'-5' exonucleolytic degradation, or deadenylation-dependent mRNA decaping and subsequent 5'-3' exonucleolytic degradation by XRN1. May also be involved in post-transcriptional maturation of mRNA poly(A) tails. PAN3 acts as a positive regulator for PAN activity, recruiting the catalytic subunit PAN2 to mRNA via its interaction with RNA and with PAB1. This chain is PAN2-PAN3 deadenylation complex subunit PAN3, found in Kluyveromyces lactis (strain ATCC 8585 / CBS 2359 / DSM 70799 / NBRC 1267 / NRRL Y-1140 / WM37) (Yeast).